We begin with the raw amino-acid sequence, 151 residues long: uncharacterized protein (151 aa).

The interval 122 to 151 is disordered; the sequence is GVAQRQVPTTGTHSFFHCTSEGNKEKPHHF.

This is an uncharacterized protein from Homo sapiens (Human).